A 508-amino-acid polypeptide reads, in one-letter code: Photosystem II CP47 reaction center protein (508 aa).

6 helical membrane-spanning segments follow: residues S21 to S36, I101 to W115, G140 to F156, I203 to S218, V237 to V252, and S457 to R472.

This sequence belongs to the PsbB/PsbC family. PsbB subfamily. In terms of assembly, PSII is composed of 1 copy each of membrane proteins PsbA, PsbB, PsbC, PsbD, PsbE, PsbF, PsbH, PsbI, PsbJ, PsbK, PsbL, PsbM, PsbT, PsbX, PsbY, PsbZ, Psb30/Ycf12, at least 3 peripheral proteins of the oxygen-evolving complex and a large number of cofactors. It forms dimeric complexes. Binds multiple chlorophylls. PSII binds additional chlorophylls, carotenoids and specific lipids. is required as a cofactor.

Its subcellular location is the plastid. The protein localises to the chloroplast thylakoid membrane. Its function is as follows. One of the components of the core complex of photosystem II (PSII). It binds chlorophyll and helps catalyze the primary light-induced photochemical processes of PSII. PSII is a light-driven water:plastoquinone oxidoreductase, using light energy to abstract electrons from H(2)O, generating O(2) and a proton gradient subsequently used for ATP formation. This Atropa belladonna (Belladonna) protein is Photosystem II CP47 reaction center protein.